The following is a 449-amino-acid chain: Ribulose bisphosphate carboxylase large chain (449 aa).

Lys-5 is modified (N6,N6,N6-trimethyllysine). Substrate is bound by residues Asn-114 and Thr-164. The active-site Proton acceptor is Lys-166. Lys-168 provides a ligand contact to substrate. Mg(2+)-binding residues include Lys-192, Asp-194, and Glu-195. N6-carboxylysine is present on Lys-192. Catalysis depends on His-285, which acts as the Proton acceptor. Substrate-binding residues include Arg-286, His-318, and Ser-370.

This sequence belongs to the RuBisCO large chain family. Type I subfamily. In terms of assembly, heterohexadecamer of 8 large chains and 8 small chains; disulfide-linked. The disulfide link is formed within the large subunit homodimers. It depends on Mg(2+) as a cofactor. The disulfide bond which can form in the large chain dimeric partners within the hexadecamer appears to be associated with oxidative stress and protein turnover.

The protein localises to the plastid. Its subcellular location is the chloroplast. It catalyses the reaction 2 (2R)-3-phosphoglycerate + 2 H(+) = D-ribulose 1,5-bisphosphate + CO2 + H2O. The catalysed reaction is D-ribulose 1,5-bisphosphate + O2 = 2-phosphoglycolate + (2R)-3-phosphoglycerate + 2 H(+). RuBisCO catalyzes two reactions: the carboxylation of D-ribulose 1,5-bisphosphate, the primary event in carbon dioxide fixation, as well as the oxidative fragmentation of the pentose substrate in the photorespiration process. Both reactions occur simultaneously and in competition at the same active site. The sequence is that of Ribulose bisphosphate carboxylase large chain from Zamioculcas zamiifolia (Aroid palm).